A 943-amino-acid chain; its full sequence is Lactoferrin-binding protein A (943 aa).

Positions 1–27 (MNKKHGFPLTLTALAIATAFPAYAAQA) are cleaved as a signal peptide. Residues 52–178 (RRSKEATGLG…LGGAVAFRTK (127 aa)) form the TBDR plug domain. One can recognise a TBDR beta-barrel domain in the interval 189-943 (SWGIQAKTAY…NFSLALEMKF (755 aa)). Positions 926-943 (GRYAAPGRNFSLALEMKF) match the TonB C-terminal box motif.

Belongs to the TonB-dependent receptor family.

The protein localises to the cell outer membrane. In terms of biological role, unknown. May be an iron-siderophore receptor. This is Lactoferrin-binding protein A (lbpA) from Neisseria meningitidis serogroup B (strain ATCC BAA-335 / MC58).